An 833-amino-acid chain; its full sequence is Leucine--tRNA ligase (833 aa).

Positions 41-52 (PYPSGAGLHVGH) match the 'HIGH' region motif. The short motif at 610-614 (KMSKS) is the 'KMSKS' region element. Residue Lys613 coordinates ATP.

It belongs to the class-I aminoacyl-tRNA synthetase family.

Its subcellular location is the cytoplasm. It catalyses the reaction tRNA(Leu) + L-leucine + ATP = L-leucyl-tRNA(Leu) + AMP + diphosphate. The chain is Leucine--tRNA ligase from Streptococcus thermophilus (strain CNRZ 1066).